The primary structure comprises 447 residues: Phosphoglucosamine mutase (447 aa).

Catalysis depends on serine 100, which acts as the Phosphoserine intermediate. Positions 100, 239, 241, and 243 each coordinate Mg(2+). At serine 100 the chain carries Phosphoserine.

It belongs to the phosphohexose mutase family. Requires Mg(2+) as cofactor. Activated by phosphorylation.

It catalyses the reaction alpha-D-glucosamine 1-phosphate = D-glucosamine 6-phosphate. In terms of biological role, catalyzes the conversion of glucosamine-6-phosphate to glucosamine-1-phosphate. This is Phosphoglucosamine mutase from Halalkalibacterium halodurans (strain ATCC BAA-125 / DSM 18197 / FERM 7344 / JCM 9153 / C-125) (Bacillus halodurans).